We begin with the raw amino-acid sequence, 559 residues long: Coiled-coil domain-containing protein 63 (559 aa).

3 coiled-coil regions span residues 14–70, 185–261, and 364–414; these read ELSE…QAET, EKAA…KLKS, and QQQS…VEKL.

In terms of biological role, plays a role in spermiogenesis. Involved in the elongation of flagella and the formation of sperm heads. The polypeptide is Coiled-coil domain-containing protein 63 (Rattus norvegicus (Rat)).